The primary structure comprises 181 residues: Large ribosomal subunit protein uL5 (181 aa).

It belongs to the universal ribosomal protein uL5 family. Part of the 50S ribosomal subunit; part of the 5S rRNA/L5/L18/L25 subcomplex. Contacts the 5S rRNA and the P site tRNA. Forms a bridge to the 30S subunit in the 70S ribosome.

Its function is as follows. This is one of the proteins that bind and probably mediate the attachment of the 5S RNA into the large ribosomal subunit, where it forms part of the central protuberance. In the 70S ribosome it contacts protein S13 of the 30S subunit (bridge B1b), connecting the 2 subunits; this bridge is implicated in subunit movement. Contacts the P site tRNA; the 5S rRNA and some of its associated proteins might help stabilize positioning of ribosome-bound tRNAs. This Mesomycoplasma hyopneumoniae (strain 7448) (Mycoplasma hyopneumoniae) protein is Large ribosomal subunit protein uL5.